The primary structure comprises 2514 residues: Highly reducing polyketide synthase sphB (2514 aa).

Residues 66-486 (QVPIAICGMA…GANAHVILES (421 aa)) enclose the Ketosynthase family 3 (KS3) domain. Catalysis depends on for beta-ketoacyl synthase activity residues cysteine 238, histidine 374, and histidine 409. Positions 580-904 (MVFTGQGAQW…AIGALHSLNV (325 aa)) constitute a Malonyl-CoA:ACP transacylase (MAT) domain. The interval 950-1079 (HDLLGARVAE…GEVCAQSSAP (130 aa)) is N-terminal hotdog fold. Residues 950–1240 (HDLLGARVAE…AADISDTHAA (291 aa)) form the PKS/mFAS DH domain. The active-site Proton acceptor; for dehydratase activity is the histidine 982. Residues 1089 to 1240 (PRTLNVRKWY…AADISDTHAA (152 aa)) are C-terminal hotdog fold. The active-site Proton donor; for dehydratase activity is aspartate 1150. The interval 1319–1578 (WTGLDHEAIS…EPHQVTTTMV (260 aa)) is methyltransferase (CMet) domain. Positions 1779 to 2092 (GRVNSLHYAR…KGQHIGRVGV (314 aa)) constitute an Enoyl reductase (ER) domain. One can recognise a Ketoreductase (KR) domain in the interval 2120-2297 (ASYLMVGGLG…ASVVDMGAVE (178 aa)). One can recognise a Carrier domain in the interval 2427-2504 (EAAKLFAVEI…ILGQYAANEV (78 aa)). Residue serine 2464 is modified to O-(pantetheine 4'-phosphoryl)serine.

It depends on pantetheine 4'-phosphate as a cofactor.

It catalyses the reaction holo-[ACP] + 8 malonyl-CoA + acetyl-CoA + 5 AH2 + 8 NADPH + 16 H(+) = (3R)-hydroxyoctadeca-4,10-dienoyl-[ACP] + 5 A + 8 CO2 + 8 NADP(+) + 9 CoA + 7 H2O. It functions in the pathway secondary metabolite biosynthesis. In terms of biological role, highly reducing polyketide synthase; part of the gene cluster that mediates the biosynthesis of sphingofungins, bioactive molecules acting as sphingolipid inhibitors via inhibiting serine palmitoyl transferase (SPT). Within the pathway, sphB catalyzes the first step of sphingofungin biosynthesis by condensing 8 units of malonyl-CoA with one starter unit of acetyl-CoA, leading to an C18 polyketide precursor 3-hydroxyoctadeca-4,10-dienoyl-ACP containing one delta-6 desaturation and one delta-12 desaturation. The PKS sphB does not contain any putative thioesterase domain for releasing the nascent polyketide chain and it has been suggested that aminoacyl transferases can facilitate the polyketide chain release. The aminoacyl transferase sphA uses the sphB product to produce 3-keto-presphingofungin by adding an aminomalonate molecule. SphF then reduces the C-3 ketone of 3-keto-presphingofungin which leads to presphingofungin. The cytochrome P450 monooxygenase sphH converts presphingofungin into sphingofungin B1 which is further converted to sphingofungin B by the dioxygenase sphC. SphC is also able to convert presphingofungin into sphingofungin B2. The acetyltransferase sphE acetylates sphingofungin B to produce sphingofungin C, but can also convert sphingofungin B1 into sphingofungin C1 and sphingofungin B2 into sphingofungin C2. Finally, sphingofungin C can be spontaneously converted into sphingofungin D. This Aspergillus fumigatus (strain CBS 144.89 / FGSC A1163 / CEA10) (Neosartorya fumigata) protein is Highly reducing polyketide synthase sphB.